The chain runs to 603 residues: UvrABC system protein C (603 aa).

A GIY-YIG domain is found at 17–94 (TTSGCYKMLN…IKTHKPDYNV (78 aa)).

This sequence belongs to the UvrC family. As to quaternary structure, interacts with UvrB in an incision complex.

The protein resides in the cytoplasm. In terms of biological role, the UvrABC repair system catalyzes the recognition and processing of DNA lesions. UvrC both incises the 5' and 3' sides of the lesion. The N-terminal half is responsible for the 3' incision and the C-terminal half is responsible for the 5' incision. This chain is UvrABC system protein C, found in Borreliella burgdorferi (strain ATCC 35210 / DSM 4680 / CIP 102532 / B31) (Borrelia burgdorferi).